A 182-amino-acid chain; its full sequence is MENSRILSCKYRTSFGSSNARRIRSKDEIPAVVYGQGNDVLHLKIKSNEFNKKFAKFTDNTVLILDDGKLERCVFIKDVSENIASKLIYHIDFYEVDRRVELEKYVPIKLIGASVGVKEGGILTVLKEQVRVKSLPLDLPEFIELDLTPVNKGDSVFLKDLVLPSNVRLAENDENLEVVTIK.

Belongs to the bacterial ribosomal protein bL25 family. CTC subfamily. In terms of assembly, part of the 50S ribosomal subunit; part of the 5S rRNA/L5/L18/L25 subcomplex. Contacts the 5S rRNA. Binds to the 5S rRNA independently of L5 and L18.

Its function is as follows. This is one of the proteins that binds to the 5S RNA in the ribosome where it forms part of the central protuberance. The chain is Large ribosomal subunit protein bL25 from Borrelia garinii subsp. bavariensis (strain ATCC BAA-2496 / DSM 23469 / PBi) (Borreliella bavariensis).